The sequence spans 142 residues: Hemoglobin subunit alpha (142 aa).

The Globin domain maps to 2–142 (VLSAADKGNV…VSTVLTSKYR (141 aa)). Ser4 is modified (phosphoserine). Lys8 and Lys12 each carry N6-succinyllysine. Lys17 carries the post-translational modification N6-acetyllysine; alternate. Lys17 carries the post-translational modification N6-succinyllysine; alternate. Position 25 is a phosphotyrosine (Tyr25). Ser36 carries the post-translational modification Phosphoserine. The residue at position 41 (Lys41) is an N6-succinyllysine. Ser50 is subject to Phosphoserine. O2 is bound at residue His59. His88 contacts heme b. Ser103 is modified (phosphoserine). Thr109 carries the post-translational modification Phosphothreonine. Phosphoserine is present on Ser125. Phosphothreonine is present on residues Thr135 and Thr138. Ser139 carries the phosphoserine modification.

The protein belongs to the globin family. In terms of assembly, heterotetramer of two alpha chains and two beta chains. In terms of tissue distribution, red blood cells.

Its function is as follows. Involved in oxygen transport from the lung to the various peripheral tissues. Hemopressin acts as an antagonist peptide of the cannabinoid receptor CNR1. Hemopressin-binding efficiently blocks cannabinoid receptor CNR1 and subsequent signaling. This chain is Hemoglobin subunit alpha (HBA), found in Bos taurus (Bovine).